The sequence spans 245 residues: tRNA pseudouridine synthase A (245 aa).

The Nucleophile role is filled by Asp-52. Tyr-111 is a binding site for substrate.

It belongs to the tRNA pseudouridine synthase TruA family. In terms of assembly, homodimer.

It catalyses the reaction uridine(38/39/40) in tRNA = pseudouridine(38/39/40) in tRNA. Its function is as follows. Formation of pseudouridine at positions 38, 39 and 40 in the anticodon stem and loop of transfer RNAs. The chain is tRNA pseudouridine synthase A from Wolbachia sp. subsp. Drosophila simulans (strain wRi).